A 370-amino-acid chain; its full sequence is Capsular polysaccharide phosphotransferase (370 aa).

This sequence belongs to the stealth family.

In terms of biological role, part of a capsular polysaccharide synthesis locus. This chain is Capsular polysaccharide phosphotransferase, found in Actinobacillus suis.